The chain runs to 362 residues: Chorismate synthase (362 aa).

Arg-47 contacts NADP(+). FMN contacts are provided by residues 124 to 126 (RSS), Gly-286, 301 to 305 (KPTAT), and Arg-327.

The protein belongs to the chorismate synthase family. Homotetramer. It depends on FMNH2 as a cofactor.

The catalysed reaction is 5-O-(1-carboxyvinyl)-3-phosphoshikimate = chorismate + phosphate. It functions in the pathway metabolic intermediate biosynthesis; chorismate biosynthesis; chorismate from D-erythrose 4-phosphate and phosphoenolpyruvate: step 7/7. Functionally, catalyzes the anti-1,4-elimination of the C-3 phosphate and the C-6 proR hydrogen from 5-enolpyruvylshikimate-3-phosphate (EPSP) to yield chorismate, which is the branch point compound that serves as the starting substrate for the three terminal pathways of aromatic amino acid biosynthesis. This reaction introduces a second double bond into the aromatic ring system. The protein is Chorismate synthase of Nostoc punctiforme (strain ATCC 29133 / PCC 73102).